The following is a 755-amino-acid chain: Proprotein convertase subtilisin/kexin type 4 (755 aa).

A signal peptide spans 1 to 25 (MRPAPIALWLRLVLALALVRPRAVG). Residues 26 to 113 (WAPVRAPIYV…QQTLQRRVKR (88 aa)) constitute a propeptide that is removed on maturation. A Peptidase S8 domain is found at 126–440 (QWYMNSEAQP…YGLLDAGLLV (315 aa)). Catalysis depends on charge relay system residues D158, H199, and S373. The P/Homo B domain occupies 449 to 581 (TQPQRKCAVR…TLLLYGTAED (133 aa)). N-linked (GlcNAc...) asparagine glycans are attached at residues N475 and N629. A helical transmembrane segment spans residues 709 to 729 (AMVLSLLAVTLGGPVLCGMSM).

It belongs to the peptidase S8 family. Furin subfamily. In terms of assembly, the proPCSK4 form interacts with HSPA5; the interaction takes place at the endoplasmic reticulum. N-glycosylated. Post-translationally, synthesized in the endoplasmic reticulum as a zymogen, is matured by autocatalytic cleavage between the prodomain and the catalytic domain. Placenta.

The protein localises to the membrane. The protein resides in the cytoplasmic vesicle. Its subcellular location is the secretory vesicle. It is found in the acrosome membrane. Functionally, proprotein convertase involved in the processing of hormone and other protein precursors at sites comprised of pairs of basic amino acid residues. In males, important for ADAM2 processing as well as other acrosomal proteins with roles in fertilization and critical for normal fertilization events such as sperm capacitation, acrosome reaction and binding of sperm to zona pellucida. Also plays a role in female fertility, involved in the regulation of trophoblast migration and placental development, may be through the proteolytical processing and activation of proteins such as IGF2. May also participate in folliculogenesis in the ovaries. The sequence is that of Proprotein convertase subtilisin/kexin type 4 from Homo sapiens (Human).